A 1185-amino-acid chain; its full sequence is Liprin-alpha-4 (1185 aa).

Coiled coils occupy residues 24–123 and 165–499; these read ANFE…CLVS and DEKV…GRGG. Disordered regions lie at residues 638-709 and 721-757; these read SASP…RTLR and EEGK…KSSI. S640 is modified (phosphoserine). Positions 645–656 are enriched in polar residues; the sequence is GRSTPKLTSRSA. S681 carries the phosphoserine modification. Basic and acidic residues predominate over residues 684 to 695; the sequence is SREENREDKATI. A compositionally biased stretch (low complexity) spans 729–742; sequence DQGSNPSSSNSSQD. SAM domains lie at 829 to 895, 944 to 1008, and 1032 to 1101; these read WDGP…MVSL, NHEW…LKRL, and WTND…LLAL.

The protein belongs to the liprin family. Liprin-alpha subfamily. As to quaternary structure, forms homodimers and heterodimers with liprins-alpha and liprins-beta. Interacts with the second PTPase domain of PTPRD, PTPRF and PTPRS. Interacts with RIMS1 and RIMS2. Interacts with GIT1 and GIT2. Interacts with GRIP1. Interacts with KIF1A. Expressed only in the heart, brain, and skeletal muscle.

The protein resides in the cytoplasm. It localises to the cell surface. May regulate the disassembly of focal adhesions. May localize receptor-like tyrosine phosphatases type 2A at specific sites on the plasma membrane, possibly regulating their interaction with the extracellular environment and their association with substrates. This Homo sapiens (Human) protein is Liprin-alpha-4 (PPFIA4).